Here is a 173-residue protein sequence, read N- to C-terminus: Alpha-crystallin A chain (173 aa).

The residue at position 1 (M1) is an N-acetylmethionine. Residues 52-164 (LFRSVLESGI…SDRPIPVARE (113 aa)) enclose the sHSP domain. Residues H100, E102, H107, and H154 each contribute to the Zn(2+) site. A disordered region spans residues 152–173 (TIHSDRPIPVAREEKPTSAPSS). Residues 153–167 (IHSDRPIPVAREEKP) show a composition bias toward basic and acidic residues.

It belongs to the small heat shock protein (HSP20) family. Heteropolymer composed of three CRYAA and one CRYAB subunits. Inter-subunit bridging via zinc ions enhances stability, which is crucial as there is no protein turn over in the lens. Can also form homodimers and homotetramers (dimers of dimers) which serve as the building blocks of homooligomers. Within homooligomers, the zinc-binding motif is created from residues of 3 different molecules. His-100 and Glu-102 from one molecule are ligands of the zinc ion, and His-107 and His-154 residues from additional molecules complete the site with tetrahedral coordination geometry.

It is found in the cytoplasm. Its subcellular location is the nucleus. Contributes to the transparency and refractive index of the lens. May act as a chaperone, preventing aggregation of various proteins under a wide range of stress conditions. This Alligator mississippiensis (American alligator) protein is Alpha-crystallin A chain (CRYAA).